Here is a 1019-residue protein sequence, read N- to C-terminus: Insulin-degrading enzyme (1019 aa).

His108 serves as a coordination point for Zn(2+). Residue Glu111 is the Proton acceptor of the active site. Residues His112 and Glu189 each contribute to the Zn(2+) site. Lys192 is modified (N6-succinyllysine). Residue 359-363 participates in substrate binding; that stretch reads LVGGQ. Arg429 lines the ATP pocket. The residue at position 697 (Lys697) is an N6-succinyllysine. The short motif at 853–858 is the SlyX motif element; sequence EKPPHY. Residue 895–901 coordinates ATP; that stretch reads DKPKKLS.

It belongs to the peptidase M16 family. Homodimer. Can also form homotetramers. It depends on Zn(2+) as a cofactor. As to expression, detected in brain and liver (at protein level). Detected in liver.

It is found in the cytoplasm. It localises to the cytosol. The protein localises to the cell membrane. Its subcellular location is the secreted. It carries out the reaction Degradation of insulin, glucagon and other polypeptides. No action on proteins.. Its activity is regulated as follows. Activated by ATP, other nucleotide triphosphates and small peptides. Inhibited by bacitracin. Its function is as follows. Plays a role in the cellular breakdown of insulin, APP peptides, IAPP peptides, natriuretic peptides, glucagon, bradykinin, kallidin, and other peptides, and thereby plays a role in intercellular peptide signaling. Substrate binding induces important conformation changes, making it possible to bind and degrade larger substrates, such as insulin. Contributes to the regulation of peptide hormone signaling cascades and regulation of blood glucose homeostasis via its role in the degradation of insulin, glucagon and IAPP. Plays a role in the degradation and clearance of APP-derived amyloidogenic peptides that are secreted by neurons and microglia. Degrades the natriuretic peptides ANP, BNP and CNP, inactivating their ability to raise intracellular cGMP. Also degrades an aberrant frameshifted 40-residue form of NPPA (fsNPPA) which is associated with familial atrial fibrillation in heterozygous patients. Involved in antigen processing. Produces both the N terminus and the C terminus of MAGEA3-derived antigenic peptide (EVDPIGHLY) that is presented to cytotoxic T lymphocytes by MHC class I. This is Insulin-degrading enzyme (Ide) from Mus musculus (Mouse).